A 397-amino-acid chain; its full sequence is Elongation factor Tu (397 aa).

A tr-type G domain is found at 10–206 (KPHVNIGTIG…ACDDYIPEPV (197 aa)). The tract at residues 19-26 (GHIDHGKT) is G1. Residue 19-26 (GHIDHGKT) coordinates GTP. Residue threonine 26 participates in Mg(2+) binding. The interval 62–66 (GITIS) is G2. Residues 83–86 (DCPG) form a G3 region. GTP-binding positions include 83–87 (DCPGH) and 138–141 (NKAD). Positions 138-141 (NKAD) are G4. Residues 176 to 178 (SAL) are G5.

Belongs to the TRAFAC class translation factor GTPase superfamily. Classic translation factor GTPase family. EF-Tu/EF-1A subfamily. As to quaternary structure, monomer.

The protein localises to the cytoplasm. It catalyses the reaction GTP + H2O = GDP + phosphate + H(+). In terms of biological role, GTP hydrolase that promotes the GTP-dependent binding of aminoacyl-tRNA to the A-site of ribosomes during protein biosynthesis. This is Elongation factor Tu from Acidothermus cellulolyticus (strain ATCC 43068 / DSM 8971 / 11B).